Reading from the N-terminus, the 478-residue chain is Zinc metalloproteinase/disintegrin (478 aa).

Residues 1–20 (MIEVLLVTICLAAFPYQGSS) form the signal peptide. Positions 21-187 (IILESGNVND…PIKKASQSNL (167 aa)) are excised as a propeptide. 3 cysteine pairs are disulfide-bonded: C304–C384, C344–C368, and C346–C351. H329 serves as a coordination point for Zn(2+). E330 is an active-site residue. The Zn(2+) site is built by H333 and H339. A propeptide spanning residues 390–405 (LRTDTVSTPVSGNELL) is cleaved from the precursor. A Disintegrin domain is found at 397–478 (TPVSGNELLE…AGCPRNPFHA (82 aa)). 6 disulfide bridges follow: C411/C426, C413/C421, C420/C443, C434/C440, C439/C464, and C452/C471. A Cell attachment site motif is present at residues 456 to 458 (RGD).

The protein belongs to the venom metalloproteinase (M12B) family. P-II subfamily. P-IIa sub-subfamily. As to quaternary structure, monomer. Expressed by the venom gland.

It localises to the secreted. Its function is as follows. Binds alpha-5/beta-1 (ITGAV/ITGB1), alpha-V/beta-3 (ITGAV/ITGB3) and alpha-M/beta-2 (ITGAM/ITGB2) integrins. Is a potent inhibitor of platelet aggregation induced by ADP, collagen, and thrombin. Induces neutrophil chemotaxis and inhibits the chemotaxis of human neutrophils toward fMLP, IL-8, and jarastatin itself. Directly activates an integrin-coupled signaling and modulate the MAPK pathway in different ways, leading the neutrophils to express different functional response. Induces Erk-2 translocation to nucleus and a delay of the spontaneous apoptosis of neutrophils. Increases the IL-8 mRNA levels in neutrophils. When injected simultaneously with melanoma cells in mice, jarastatin, flavoridin (FL) and kistrin (KR) significantly reduce tumor lung colonization. Inhibits mouse melanoma B16F10 cell growth in vitro. When it interacts with melanoma cells, it induces actin cytoskeleton rearrangement, increasing actin polymerization and PTK2/FAK1 phosphorylation. Interferes with NF-kappaB translocation in melanoma cells. In Bothrops jararaca (Jararaca), this protein is Zinc metalloproteinase/disintegrin.